The following is a 281-amino-acid chain: Release factor glutamine methyltransferase (281 aa).

S-adenosyl-L-methionine-binding residues include Glu-142 and Asn-184. Position 184–187 (Asn-184–Tyr-187) interacts with substrate. Residues Ala-261–Pro-281 form a disordered region.

Belongs to the protein N5-glutamine methyltransferase family. PrmC subfamily.

The catalysed reaction is L-glutaminyl-[peptide chain release factor] + S-adenosyl-L-methionine = N(5)-methyl-L-glutaminyl-[peptide chain release factor] + S-adenosyl-L-homocysteine + H(+). Functionally, methylates the class 1 translation termination release factors RF1/PrfA and RF2/PrfB on the glutamine residue of the universally conserved GGQ motif. The protein is Release factor glutamine methyltransferase of Streptomyces coelicolor (strain ATCC BAA-471 / A3(2) / M145).